A 122-amino-acid chain; its full sequence is Ribosome-binding factor A (122 aa).

This sequence belongs to the RbfA family. Monomer. Binds 30S ribosomal subunits, but not 50S ribosomal subunits or 70S ribosomes.

The protein resides in the cytoplasm. Functionally, one of several proteins that assist in the late maturation steps of the functional core of the 30S ribosomal subunit. Associates with free 30S ribosomal subunits (but not with 30S subunits that are part of 70S ribosomes or polysomes). Required for efficient processing of 16S rRNA. May interact with the 5'-terminal helix region of 16S rRNA. The polypeptide is Ribosome-binding factor A (Burkholderia thailandensis (strain ATCC 700388 / DSM 13276 / CCUG 48851 / CIP 106301 / E264)).